A 117-amino-acid chain; its full sequence is Large ribosomal subunit protein uL18 (117 aa).

Belongs to the universal ribosomal protein uL18 family. As to quaternary structure, part of the 50S ribosomal subunit; part of the 5S rRNA/L5/L18/L25 subcomplex. Contacts the 5S and 23S rRNAs.

Its function is as follows. This is one of the proteins that bind and probably mediate the attachment of the 5S RNA into the large ribosomal subunit, where it forms part of the central protuberance. In Edwardsiella ictaluri (strain 93-146), this protein is Large ribosomal subunit protein uL18.